The chain runs to 388 residues: Dual-specificity RNA methyltransferase RlmN (388 aa).

The Proton acceptor role is filled by glutamate 109. The Radical SAM core domain occupies 115–354 (EEDRATLCVS…TIVRKTRGDD (240 aa)). Cysteine 122 and cysteine 359 are disulfide-bonded. The [4Fe-4S] cluster site is built by cysteine 129, cysteine 133, and cysteine 136. S-adenosyl-L-methionine-binding positions include 183-184 (GE), serine 215, 237-239 (SLH), and asparagine 316. Cysteine 359 functions as the S-methylcysteine intermediate in the catalytic mechanism.

The protein belongs to the radical SAM superfamily. RlmN family. [4Fe-4S] cluster serves as cofactor.

It localises to the cytoplasm. The catalysed reaction is adenosine(2503) in 23S rRNA + 2 reduced [2Fe-2S]-[ferredoxin] + 2 S-adenosyl-L-methionine = 2-methyladenosine(2503) in 23S rRNA + 5'-deoxyadenosine + L-methionine + 2 oxidized [2Fe-2S]-[ferredoxin] + S-adenosyl-L-homocysteine. The enzyme catalyses adenosine(37) in tRNA + 2 reduced [2Fe-2S]-[ferredoxin] + 2 S-adenosyl-L-methionine = 2-methyladenosine(37) in tRNA + 5'-deoxyadenosine + L-methionine + 2 oxidized [2Fe-2S]-[ferredoxin] + S-adenosyl-L-homocysteine. Functionally, specifically methylates position 2 of adenine 2503 in 23S rRNA and position 2 of adenine 37 in tRNAs. m2A2503 modification seems to play a crucial role in the proofreading step occurring at the peptidyl transferase center and thus would serve to optimize ribosomal fidelity. This Enterobacter sp. (strain 638) protein is Dual-specificity RNA methyltransferase RlmN.